Consider the following 215-residue polypeptide: Pyrophosphate-energized proton pump 2 (215 aa).

Helical transmembrane passes span 16-36 (VYPL…TFFV), 51-71 (GLIA…YATV), 86-106 (GTNL…IVVI), 136-156 (GLAV…GGII), and 164-184 (LFGT…IVAL).

It belongs to the H(+)-translocating pyrophosphatase (TC 3.A.10) family. As to quaternary structure, homodimer. Requires Mg(2+) as cofactor.

It is found in the cell inner membrane. It catalyses the reaction diphosphate + H2O + H(+)(in) = 2 phosphate + 2 H(+)(out). In terms of biological role, proton pump that utilizes the energy of pyrophosphate hydrolysis as the driving force for proton movement across the membrane. Generates a proton motive force. This chain is Pyrophosphate-energized proton pump 2 (hppA2), found in Rhizobium leguminosarum bv. trifolii.